A 248-amino-acid polypeptide reads, in one-letter code: 14-3-3-like protein 1 (248 aa).

Belongs to the 14-3-3 family. As to quaternary structure, interacts with daf-16 and sir-2.1. Interacts with atgl-1. Interacts with hcf-1.

The protein resides in the cytoplasm. It localises to the nucleus. Its function is as follows. Required to modulate lifespan, in concert with hcf-1, acting redundantly with 14-3-3-like protein ftt-2. This Caenorhabditis elegans protein is 14-3-3-like protein 1 (par-5).